The sequence spans 85 residues: COMM domain-containing protein 6 (85 aa).

Met-1 is subject to N-acetylmethionine. Residues 18–85 (QLIDFEWKLG…KEIAAIIETV (68 aa)) enclose the COMM domain.

This sequence belongs to the COMM domain-containing protein 6 family. As to quaternary structure, component of the commander complex consisting of the CCC subcomplex and the retriever subcomplex. Component of the CCC (COMMD/CCDC22/CCDC93) subcomplex consisting of COMMD1, COMMD2, COMMD3, COMMD4, COMMD5, COMMD6, COMMD7, COMMD8, COMMD9, COMMD10, CCDC22 and CCDC93; within the complex forms a heterodimer with COMMD1. May form a homodimer with isoform 1. Interacts with RELA, RELB, NFKB1/p105. Does not interact with NFKBIB. Interacts with CCDC22, CCDC93, SCNN1B, CUL4A.

The protein localises to the nucleus. The protein resides in the cytoplasm. Scaffold protein in the commander complex that is essential for endosomal recycling of transmembrane cargos; the commander complex is composed of the CCC subcomplex and the retriever subcomplex. May modulate activity of cullin-RING E3 ubiquitin ligase (CRL) complexes. Down-regulates activation of NF-kappa-B. Inhibits TNF-induced NFKB1 activation. The chain is COMM domain-containing protein 6 (COMMD6) from Bos taurus (Bovine).